The following is a 288-amino-acid chain: 4-diphosphocytidyl-2-C-methyl-D-erythritol kinase (288 aa).

Residue lysine 11 is part of the active site. Residue 93–103 (PFGAGLGGGSS) participates in ATP binding. Aspartate 135 is an active-site residue.

This sequence belongs to the GHMP kinase family. IspE subfamily.

It catalyses the reaction 4-CDP-2-C-methyl-D-erythritol + ATP = 4-CDP-2-C-methyl-D-erythritol 2-phosphate + ADP + H(+). It participates in isoprenoid biosynthesis; isopentenyl diphosphate biosynthesis via DXP pathway; isopentenyl diphosphate from 1-deoxy-D-xylulose 5-phosphate: step 3/6. Catalyzes the phosphorylation of the position 2 hydroxy group of 4-diphosphocytidyl-2C-methyl-D-erythritol. The polypeptide is 4-diphosphocytidyl-2-C-methyl-D-erythritol kinase (Chlorobium limicola (strain DSM 245 / NBRC 103803 / 6330)).